The sequence spans 530 residues: Type 2 DNA topoisomerase 6 subunit B (530 aa).

Residues Asn42, Asp76, 97–98 (SK), 106–113 (GMYGLGVK), and Lys427 each bind ATP.

The protein belongs to the TOP6B family. In terms of assembly, homodimer. Heterotetramer of two Top6A and two Top6B chains.

The catalysed reaction is ATP-dependent breakage, passage and rejoining of double-stranded DNA.. Functionally, relaxes both positive and negative superturns and exhibits a strong decatenase activity. The protein is Type 2 DNA topoisomerase 6 subunit B of Saccharolobus solfataricus (strain ATCC 35092 / DSM 1617 / JCM 11322 / P2) (Sulfolobus solfataricus).